Consider the following 498-residue polypeptide: GPI mannosyltransferase 4 (498 aa).

9 helical membrane passes run 4–24 (AVIRYIWLLVALLVALEPAYV), 60–80 (FAPLWIFMGPALVAARLFNAG), 118–134 (AFLLSTTYVVGAFQSHT), 135–155 (FSNSIETLLAVAAVGLLEVVI), 169–189 (GVLGFLIALGLFNRVTFAGYL), 208–228 (LAALLLCFLLTSGACIWIDTL), 261–281 (YTHILVNLPMLLGPGLLFALG), 286–303 (LSLPLLSCVSGVATLSLF), and 332–352 (LTLTLKLWLAFNGLMVVIMGV). N-linked (GlcNAc...) asparagine glycosylation is present at Asn-429.

It belongs to the glycosyltransferase 22 family. PIGZ subfamily.

It is found in the endoplasmic reticulum membrane. The protein operates within glycolipid biosynthesis; glycosylphosphatidylinositol-anchor biosynthesis. Functionally, alpha-1,2-mannosyltransferase involved in glycosylphosphatidylinositol-anchor biosynthesis. Transfers a fourth mannose to trimannosyl-GPIs during GPI precursor assembly. The presence of a fourth mannose in GPI is essential in fungi. The chain is GPI mannosyltransferase 4 (SMP3) from Eremothecium gossypii (strain ATCC 10895 / CBS 109.51 / FGSC 9923 / NRRL Y-1056) (Yeast).